The primary structure comprises 325 residues: Acetyl-coenzyme A carboxylase carboxyl transferase subunit alpha (325 aa).

One can recognise a CoA carboxyltransferase C-terminal domain in the interval 38 to 292 (RLEDRLAKLQ…DETLKQSLKT (255 aa)).

It belongs to the AccA family. Acetyl-CoA carboxylase is a heterohexamer composed of biotin carboxyl carrier protein (AccB), biotin carboxylase (AccC) and two subunits each of ACCase subunit alpha (AccA) and ACCase subunit beta (AccD).

It is found in the cytoplasm. The catalysed reaction is N(6)-carboxybiotinyl-L-lysyl-[protein] + acetyl-CoA = N(6)-biotinyl-L-lysyl-[protein] + malonyl-CoA. It functions in the pathway lipid metabolism; malonyl-CoA biosynthesis; malonyl-CoA from acetyl-CoA: step 1/1. With respect to regulation, inhibited by pyrrolidine dione antibiotics moiramide B (CPD1) and CPD2. Component of the acetyl coenzyme A carboxylase (ACC) complex. First, biotin carboxylase catalyzes the carboxylation of biotin on its carrier protein (BCCP) and then the CO(2) group is transferred by the carboxyltransferase to acetyl-CoA to form malonyl-CoA. In Bacillus subtilis (strain 168), this protein is Acetyl-coenzyme A carboxylase carboxyl transferase subunit alpha.